Consider the following 797-residue polypeptide: N-acetylneuraminate (7)9-O-acetyltransferase (797 aa).

Over 1–18 (MAALAYNLGKREINHYFS) the chain is Cytoplasmic. The helical transmembrane segment at 19–39 (VRSAKVLALVAVLLLAACHLA) threads the bilayer. The Lumenal portion of the chain corresponds to 40 to 313 (SRRYRGNDSC…QPRPPVTLIQ (274 aa)). N-linked (GlcNAc...) asparagine glycosylation is present at asparagine 46. The Acyl-ester intermediate role is filled by serine 94. N-linked (GlcNAc...) asparagine glycosylation is found at asparagine 175 and asparagine 187. Residues aspartate 270 and histidine 273 contribute to the active site. The chain crosses the membrane as a helical span at residues 314-334 (KLAACFFTLSIIGYLIFYIIH). The Cytoplasmic portion of the chain corresponds to 335–363 (RNAHRKNKPCTDLESGEEKKNIINTPVSS). The helical transmembrane segment at 364–384 (LEILLQSFCKLGLIMAYFYMC) threads the bilayer. Residues 385–395 (DRANLFMKENK) lie on the Lumenal side of the membrane. A helical transmembrane segment spans residues 396 to 416 (FYTHSSFFIPIIYILVLGVFY). Topologically, residues 417–439 (NENTKETKVLNREQTDEWKGWMQ) are cytoplasmic. The helical transmembrane segment at 440–460 (LVILIYHISGASTFLPVYMHI) threads the bilayer. Arginine 461 is a topological domain (lumenal). Residues 462–482 (VLVAAYLFQTGYGHFSYFWIK) form a helical membrane-spanning segment. Over 483–486 (GDFG) the chain is Cytoplasmic. A helical membrane pass occupies residues 487 to 507 (IYRVCQVLFRLNFLVVVLCIV). Topologically, residues 508-513 (MDRPYQ) are lumenal. Residues 514–534 (FYYFVPLVTVWFMVIYVTLAL) form a helical membrane-spanning segment. Residues 535–547 (WPQIIQKKANGNC) lie on the Cytoplasmic side of the membrane. Residues 548–568 (FWHFGLLLKLGFLLLFICFLA) form a helical membrane-spanning segment. Topologically, residues 569 to 605 (YSQGAFEKIFSLWPLSKCFELKGNVYEWWFRWRLDRY) are lumenal. A helical transmembrane segment spans residues 606-626 (VVFHGMLFAFIYLALQKRQIL). Over 627-638 (SEGKGEPLFSNK) the chain is Cytoplasmic. The chain crosses the membrane as a helical span at residues 639–659 (ISNFLLFISVVSFLTYSIWAS). Residues 660–671 (SCKNKAECNELH) lie on the Lumenal side of the membrane. A helical membrane pass occupies residues 672 to 692 (PSVSVVQILAFILIRNIPGYA). Residues 693-698 (RSVYSS) lie on the Cytoplasmic side of the membrane. Residues 699–719 (FFAWFGKISLELFICQYHIWL) form a helical membrane-spanning segment. Topologically, residues 720 to 725 (AADTRG) are lumenal. A helical membrane pass occupies residues 726 to 746 (ILVLIPGNPMLNIIVSTFIFV). The Cytoplasmic segment spans residues 747–770 (CVAHEISQITNDLAQIIIPKDNSS). The helical transmembrane segment at 771 to 791 (LLKRLACIAAFFCGLLILSSI) threads the bilayer. At 792 to 797 (QDKSKH) the chain is on the lumenal side.

Belongs to the PC-esterase family. CASD1 subfamily. In terms of processing, N-glycosylated. Highly expressed in peripheral B lymphocytes.

The protein resides in the golgi apparatus membrane. The enzyme catalyses CMP-N-acetyl-beta-neuraminate + acetyl-CoA = CMP-N-acetyl-9-O-acetyl-beta-neuraminate + CoA. The catalysed reaction is a ganglioside GD3 (d18:1(4E)) + acetyl-CoA = a ganglioside Ac-O-7-GD3(d18:1(4E)) + CoA. It catalyses the reaction CMP-N-acetyl-beta-neuraminate + acetyl-CoA = CMP-N-acetyl-7-O-acetyl-beta-neuraminate + CoA. Its function is as follows. Key enzyme in the biosynthesis of O-acetylated (O-Ac) sialoglycans such as gangliosides O-AcGD3 and O-AcGD2, which affect various processes such as cell-cell interactions, host-pathogen recognition. Catalyzes the transfer of an acetyl group from a donor, the acetyl-coenzyme-A molecule (acetyl-CoA), to the C7/8/9 OH-position of a sialic acid residue. The primary site of O-acetyl group transfer on sialic acid seems to depend on cell type and can be C7, from which the O-acetyl group could subsequently migrate to the C8 and then to the C9 position, or at C9 with possibility of migrating to the C8 and then to the C7 position. Together with ST8SIA1 (GD3 synthase) it increases the levels of ganglioside Ac-O-7-GD3. Can transfer the acetyl group from acetyl-CoA to free sialate (N-acetylneuraminate, Neu5Ac) in vitro, but has preferred substrate specificity for CMP-activated sialate (CMP-Neu5Ac), resulting in the formation of 9-O-acetylated CMP-Neu5Ac (CMP-Neu5,9Ac2). CMP-Neu5,9Ac2 may be used by sialyltransferases as a sialate donor for glycoconjugate acceptors such as ganglioside GD3. O-acetylation at position C9 of ganglioside GD3 can counteract the pro-apoptotic effects of the ganglioside GD3 in tumor cells. The sequence is that of N-acetylneuraminate (7)9-O-acetyltransferase from Homo sapiens (Human).